A 348-amino-acid chain; its full sequence is Histone PARylation factor 1 (348 aa).

Residues 1–10 are compositionally biased toward basic residues; it reads MAGRGKRKPR. The disordered stretch occupies residues 1–38; that stretch reads MAGRGKRKPRSLPQTETPNGEVKKAKEGLKDDKTSVGE. Over residues 21–38 the composition is skewed to basic and acidic residues; it reads EVKKAKEGLKDDKTSVGE. Residues 170–200 are a coiled coil; sequence LQKKKKEKRQQKDDAALNRLEEDLKREAERL. The active-site Proton donor is E285.

The protein belongs to the HPF1 family. In terms of assembly, interacts with PARP1 (via the PARP catalytic domain). Interacts with PARP2 (via the PARP catalytic domain). Interacts with core nucleosomes in a parp1- and parp2-dependent manner. In terms of tissue distribution, in adult, mainly expressed in gonads.

It localises to the chromosome. The protein localises to the nucleus. Its function is as follows. Cofactor for serine ADP-ribosylation that confers serine specificity on parp1 and parp2 and plays a key role in DNA damage response. Initiates the repair of double-strand DNA breaks: recruited to DNA damage sites by parp1 and parp2 and switches the amino acid specificity of parp1 and parp2 from aspartate or glutamate to serine residues, licensing serine ADP-ribosylation of target proteins. Serine ADP-ribosylation of target proteins, such as histones, promotes decompaction of chromatin and the recruitment of repair factors leading to the reparation of DNA strand breaks. Serine ADP-ribosylation of proteins constitutes the primary form of ADP-ribosylation of proteins in response to DNA damage. Hpf1 acts by completing the active site of parp1 and parp2: forms a composite active site composed of residues from Hpf1 and parp1 or parp2. While hpf1 promotes the initiation of serine ADP-ribosylation, it restricts the polymerase activity of parp1 and parp2 in order to limit the length of poly-ADP-ribose chains. Hpf1 also promotes tyrosine ADP-ribosylation, probably by conferring tyrosine specificity on parp1. The polypeptide is Histone PARylation factor 1 (Danio rerio (Zebrafish)).